We begin with the raw amino-acid sequence, 328 residues long: MSAAMLLAPGDVIKRSSEELKQRQIQINLTDWTEGETNKESKAERKEGDKAEELKDGEGRNRRAARRKRAAKETKDARCDRRIHTAVGSGSSAKGPGERANENVDRGDGKVGGGGGDADAGVGTTGANGGRWVVLTEEIRRAIESKYGTKIDVYRDEVPAQIIEVERSLQKELGISREGVAEQTERLRDLRRKEKSGAHAKAAERGRRKQGKKPHGDAQREGPEEEKTSEEPASVGITIEGVMSQKKLLSMIGGVERKMAPIGARESAVMLVSNSIKDVVRATAYFTAPTGDPHWKEVAAKLQKRRTIRYTSTGGDVKTEFLHLIDHL.

Disordered regions lie at residues 31–128 (DWTE…TGAN) and 180–237 (VAEQ…SVGI). Composition is skewed to basic and acidic residues over residues 36 to 61 (ETNKESKAERKEGDKAEELKDGEGRN), 71 to 83 (AKETKDARCDRRI), and 96 to 109 (PGERANENVDRGDG). Lysine 110 contributes to the ATP binding site. Residues 110-128 (KVGGGGGDADAGVGTTGAN) are compositionally biased toward gly residues. 2 stretches are compositionally biased toward basic and acidic residues: residues 180–205 (VAEQTERLRDLRRKEKSGAHAKAAER) and 214–230 (PHGDAQREGPEEEKTSE).

It belongs to the orbivirus VP6 family. Homohexamer.

The protein resides in the virion. It catalyses the reaction ATP + H2O = ADP + phosphate + H(+). Functionally, ATP dependent RNA helicase essential for RNA packaging and viral transcription. Possesses ss- and dsRNA-binding capacity. This Bluetongue virus 1 (isolate South Africa) (BTV 1) protein is Helicase VP6-A (Segment-9).